Here is a 570-residue protein sequence, read N- to C-terminus: Interleukin-1 receptor accessory protein (570 aa).

A signal peptide spans Met1–Ala20. Ig-like C2-type domains follow at residues Ser21–Pro128, Ser136–Thr226, and Pro242–Lys350. Topologically, residues Ser21–Thr367 are extracellular. 5 disulfide bridges follow: Cys24/Cys122, Cys47/Cys114, Cys137/Cys181, Cys160/Cys212, and Cys266/Cys332. Asn57 carries an N-linked (GlcNAc...) asparagine glycan. The interval Ile69 to Phe85 is essential for interaction with PTPRD. Residues Asn107, Asn111, and Asn118 are each glycosylated (N-linked (GlcNAc...) asparagine). 3 N-linked (GlcNAc...) asparagine glycosylation sites follow: Asn196, Asn209, and Asn299. Residues Val368 to Phe388 form a helical membrane-spanning segment. At Tyr389–Val570 the chain is on the cytoplasmic side. In terms of domain architecture, TIR spans Lys403 to Met546. The active site involves Glu482. Positions Lys549–Val570 are disordered. Residue Ser557 is modified to Phosphoserine. Over residues Asp558–Val570 the composition is skewed to polar residues.

The protein belongs to the interleukin-1 receptor family. As to quaternary structure, the interleukin-36 receptor complex is a heterodimer of IL1RL2 and IL1RAP; the association is inhibited by IL36RN. The interleukin-1 receptor complex is a heterodimer of IL1R1 and IL1RAP. Associates with IL1R2 to form a non-signaling interleukin-1 receptor complex. Interacts with IL-33-bound IL1RL1 to form the minimal interleukin-33 signaling complex with a 1:1:1 stoichiometry. Interacts with KIT (independently of stimulation with KITLG/SCF). A mast cell-specific KITLG/SCF-induced interleukin-33 signaling complex contains IL1RL1, IL1RAP, KIT and MYD88. Interacts (via the first immunoglobilin domain) with PTPRD (via the third immunoglobilin domain); induces pre- and postsynaptic differentiation of neurons.

It is found in the cell membrane. It localises to the secreted. It carries out the reaction NAD(+) + H2O = ADP-D-ribose + nicotinamide + H(+). Functionally, coreceptor for IL1RL2 in the IL-36 signaling system. Coreceptor with IL1R1 in the IL-1 signaling system. Associates with IL1R1 bound to IL1B to form the high affinity interleukin-1 receptor complex which mediates interleukin-1-dependent activation of NF-kappa-B and other pathways. Signaling involves the recruitment of adapter molecules such as TOLLIP, MYD88, and IRAK1 or IRAK2 via the respective TIR domains of the receptor/coreceptor subunits. Recruits TOLLIP to the signaling complex. Does not bind to interleukin-1 alone; binding of IL1RN to IL1R1, prevents its association with IL1R1 to form a signaling complex. The cellular response is modulated through a non-signaling association with the membrane IL1R2 decoy receptor. Coreceptor for IL1RL1 in the IL-33 signaling system. Can bidirectionally induce pre- and postsynaptic differentiation of neurons by trans-synaptically binding to PTPRD. May play a role in IL1B-mediated costimulation of IFNG production from T-helper 1 (Th1) cells. In terms of biological role, associates with secreted ligand-bound IL1R2 and increases the affinity of secreted IL1R2 for IL1B; this complex formation may be the dominant mechanism for neutralization of IL1B by secreted/soluble receptors. Enhances the ability of secreted IL1R1 to inhibit IL-33 signaling. The sequence is that of Interleukin-1 receptor accessory protein (IL1RAP) from Macaca mulatta (Rhesus macaque).